Here is a 160-residue protein sequence, read N- to C-terminus: Large ribosomal subunit protein uL16 (160 aa).

Positions 138-160 (KNLEAPSQEKTKNSKKSQEEVKQ) are disordered.

The protein belongs to the universal ribosomal protein uL16 family. In terms of assembly, part of the 50S ribosomal subunit.

In terms of biological role, binds 23S rRNA and is also seen to make contacts with the A and possibly P site tRNAs. This Prochlorococcus marinus (strain MIT 9215) protein is Large ribosomal subunit protein uL16.